The sequence spans 368 residues: Quinolinate synthase (368 aa).

2 residues coordinate iminosuccinate: H46 and S63. C110 serves as a coordination point for [4Fe-4S] cluster. Iminosuccinate contacts are provided by residues Y141 to N143 and S162. [4Fe-4S] cluster is bound at residue C230. Residues H256 to E258 and T273 each bind iminosuccinate. A [4Fe-4S] cluster-binding site is contributed by C320.

The protein belongs to the quinolinate synthase family. Type 3 subfamily. It depends on [4Fe-4S] cluster as a cofactor.

The protein resides in the cytoplasm. It carries out the reaction iminosuccinate + dihydroxyacetone phosphate = quinolinate + phosphate + 2 H2O + H(+). The protein operates within cofactor biosynthesis; NAD(+) biosynthesis; quinolinate from iminoaspartate: step 1/1. Functionally, catalyzes the condensation of iminoaspartate with dihydroxyacetone phosphate to form quinolinate. This is Quinolinate synthase from Bacillus thuringiensis (strain Al Hakam).